The chain runs to 317 residues: Acetyl-coenzyme A carboxylase carboxyl transferase subunit alpha (317 aa).

Positions N33–E294 constitute a CoA carboxyltransferase C-terminal domain.

This sequence belongs to the AccA family. Acetyl-CoA carboxylase is a heterohexamer composed of biotin carboxyl carrier protein (AccB), biotin carboxylase (AccC) and two subunits each of ACCase subunit alpha (AccA) and ACCase subunit beta (AccD).

It is found in the cytoplasm. It carries out the reaction N(6)-carboxybiotinyl-L-lysyl-[protein] + acetyl-CoA = N(6)-biotinyl-L-lysyl-[protein] + malonyl-CoA. It functions in the pathway lipid metabolism; malonyl-CoA biosynthesis; malonyl-CoA from acetyl-CoA: step 1/1. Component of the acetyl coenzyme A carboxylase (ACC) complex. First, biotin carboxylase catalyzes the carboxylation of biotin on its carrier protein (BCCP) and then the CO(2) group is transferred by the carboxyltransferase to acetyl-CoA to form malonyl-CoA. The polypeptide is Acetyl-coenzyme A carboxylase carboxyl transferase subunit alpha (Pasteurella multocida (strain Pm70)).